A 166-amino-acid polypeptide reads, in one-letter code: Lipoprotein signal peptidase (166 aa).

4 helical membrane-spanning segments follow: residues 9 to 29 (ASGA…FDQL), 45 to 65 (ALTS…FGFL), 71 to 91 (WQRW…CYLL), and 99 to 119 (LFSL…IDRL). Residues D126 and D144 contribute to the active site. A helical membrane pass occupies residues 135 to 155 (WHFPAFNLADSAITVGAVLLI).

It belongs to the peptidase A8 family.

It is found in the cell inner membrane. The enzyme catalyses Release of signal peptides from bacterial membrane prolipoproteins. Hydrolyzes -Xaa-Yaa-Zaa-|-(S,diacylglyceryl)Cys-, in which Xaa is hydrophobic (preferably Leu), and Yaa (Ala or Ser) and Zaa (Gly or Ala) have small, neutral side chains.. It participates in protein modification; lipoprotein biosynthesis (signal peptide cleavage). This protein specifically catalyzes the removal of signal peptides from prolipoproteins. The protein is Lipoprotein signal peptidase of Burkholderia vietnamiensis (strain G4 / LMG 22486) (Burkholderia cepacia (strain R1808)).